The primary structure comprises 257 residues: Flavin-dependent thymidylate synthase (257 aa).

The 202-residue stretch at 1–202 (MNVKLVSYTR…PRLFRYVGPN (202 aa)) folds into the ThyX domain. FAD-binding positions include Ser55, 79-81 (RHR), and Gln87. DUMP-binding positions include 76-79 (QLVR), 87-91 (QMSHR), and Arg141. A ThyX motif motif is present at residues 79–89 (RHRVASYTQMS). FAD is bound by residues 157–159 (NAR) and Asn163. Arg168 is a binding site for dUMP. Catalysis depends on Arg168, which acts as the Involved in ionization of N3 of dUMP, leading to its activation.

It belongs to the thymidylate synthase ThyX family. As to quaternary structure, homotetramer. It depends on FAD as a cofactor.

The catalysed reaction is dUMP + (6R)-5,10-methylene-5,6,7,8-tetrahydrofolate + NADPH + H(+) = dTMP + (6S)-5,6,7,8-tetrahydrofolate + NADP(+). It participates in pyrimidine metabolism; dTTP biosynthesis. Functionally, catalyzes the reductive methylation of 2'-deoxyuridine-5'-monophosphate (dUMP) to 2'-deoxythymidine-5'-monophosphate (dTMP) while utilizing 5,10-methylenetetrahydrofolate (mTHF) as the methyl donor, and NADPH and FADH(2) as the reductant. This chain is Flavin-dependent thymidylate synthase, found in Sulfurisphaera tokodaii (strain DSM 16993 / JCM 10545 / NBRC 100140 / 7) (Sulfolobus tokodaii).